The sequence spans 256 residues: NAD-dependent protein deacetylase (256 aa).

One can recognise a Deacetylase sirtuin-type domain in the interval 1-254 (MDISYHEKIS…KDILDVIKSE (254 aa)). 8 residues coordinate NAD(+): alanine 28, threonine 32, phenylalanine 39, arginine 40, glutamine 105, isoleucine 107, aspartate 108, and histidine 123. Phenylalanine 39 lines the nicotinamide pocket. Nicotinamide-binding residues include isoleucine 107 and aspartate 108. Histidine 123 functions as the Proton acceptor in the catalytic mechanism. Zn(2+)-binding residues include cysteine 131, cysteine 134, cysteine 156, and cysteine 159. The NAD(+) site is built by threonine 197, serine 198, and asparagine 222.

It belongs to the sirtuin family. Class U subfamily. Zn(2+) is required as a cofactor.

Its subcellular location is the cytoplasm. It catalyses the reaction N(6)-acetyl-L-lysyl-[protein] + NAD(+) + H2O = 2''-O-acetyl-ADP-D-ribose + nicotinamide + L-lysyl-[protein]. In terms of biological role, NAD-dependent protein deacetylase which modulates the activities of several enzymes which are inactive in their acetylated form. The polypeptide is NAD-dependent protein deacetylase (Thermodesulfovibrio yellowstonii (strain ATCC 51303 / DSM 11347 / YP87)).